The following is a 217-amino-acid chain: Large ribosomal subunit protein uL3 (217 aa).

A disordered region spans residues S129–M161. Over residues A142–G153 the composition is skewed to low complexity.

The protein belongs to the universal ribosomal protein uL3 family. In terms of assembly, part of the 50S ribosomal subunit. Forms a cluster with proteins L14 and L19.

In terms of biological role, one of the primary rRNA binding proteins, it binds directly near the 3'-end of the 23S rRNA, where it nucleates assembly of the 50S subunit. The polypeptide is Large ribosomal subunit protein uL3 (Prochlorococcus marinus (strain MIT 9515)).